The sequence spans 347 residues: UPF0284 protein YN1551_0030 (347 aa).

It belongs to the UPF0284 family.

The chain is UPF0284 protein YN1551_0030 from Saccharolobus islandicus (strain Y.N.15.51 / Yellowstone #2) (Sulfolobus islandicus).